We begin with the raw amino-acid sequence, 131 residues long: Protein TAP2 (131 aa).

Residues 1 to 22 (MAKSSPTYTVLFLLGLLALSTA) form the signal peptide. The disordered stretch occupies residues 75-101 (ARSGGETDVKKMEGSMPDQGKTAGRDQ).

In terms of tissue distribution, tapetum of anthers.

The protein is Protein TAP2 (TAP2) of Antirrhinum majus (Garden snapdragon).